The primary structure comprises 290 residues: Small ribosomal subunit biogenesis GTPase RsgA (290 aa).

In terms of domain architecture, CP-type G spans 61–218 (SSELLRPAVA…IVDTPGFSTL (158 aa)). GTP contacts are provided by residues 110–113 (NKVD) and 161–169 (GPSGAGKST). Zn(2+)-binding residues include C243, C248, H250, and C256.

Belongs to the TRAFAC class YlqF/YawG GTPase family. RsgA subfamily. In terms of assembly, monomer. Associates with 30S ribosomal subunit, binds 16S rRNA. It depends on Zn(2+) as a cofactor.

The protein resides in the cytoplasm. Functionally, one of several proteins that assist in the late maturation steps of the functional core of the 30S ribosomal subunit. Helps release RbfA from mature subunits. May play a role in the assembly of ribosomal proteins into the subunit. Circularly permuted GTPase that catalyzes slow GTP hydrolysis, GTPase activity is stimulated by the 30S ribosomal subunit. This chain is Small ribosomal subunit biogenesis GTPase RsgA, found in Clostridium botulinum (strain Eklund 17B / Type B).